The primary structure comprises 330 residues: MAAAAAALAATEPPPAMPQAAGAGGPAARRDFYWLRSFLAGGIAGCCAKTTVAPLDRVKVLLQAHNHHYRHLGVFSTLRAVPKKEGYLGLYKGNGAMMIRIFPYGAIQFMAFEHYKTLITTKLGVSGHVHRLMAGSMAGMTAVICTYPLDMVRVRLAFQVKGEHTYTGIIHAFKTIYAKEGGFLGFYRGLMPTILGMAPYAGVSFFTFGTLKSVGLSYAPTLLGRPSSDNPNVLVLKTHINLLCGGVAGAIAQTISYPFDVTRRRMQLGAVLPEFEKCLTMRETMKYVYGHHGIRKGLYRGLSLNYIRCVPSQAVAFTTYELMKQFFHLN.

Solcar repeat units follow at residues Phe-32–Leu-118, Ser-126–Val-214, and Leu-236–Phe-326. 6 consecutive transmembrane segments (helical) span residues Tyr-33–Val-52, Gly-95–Phe-112, Leu-132–Leu-149, Gly-189–Gly-209, Leu-242–Thr-262, and Gly-297–Phe-317.

Belongs to the mitochondrial carrier (TC 2.A.29) family. Mostly in thyroid, liver, lung, kidney and to a lesser extent in heart and skeletal muscle.

It is found in the mitochondrion inner membrane. In terms of biological role, may be involved in the transport of coenzyme A in the mitochondrial matrix. Very little is known about the physiological function of this carrier. This Bos taurus (Bovine) protein is Solute carrier family 25 member 16 (SLC25A16).